The chain runs to 490 residues: Tegument protein VP16 (490 aa).

The disordered stretch occupies residues 12–35 (MNADGASPPPPRPAGGPKNTPAAP). 4 positions are modified to phosphoserine: Ser18, Ser353, Ser411, and Ser452. Residues 411–490 (STAPPTDVSL…DALGIDEYGG (80 aa)) form a transcriptional activation region.

This sequence belongs to the herpesviridae tegument protein VP16 protein family. In terms of assembly, interacts with tegument protein VP22. Interacts with gH (via C-terminus). Interacts with the virion host shutoff protein (vhs). Interacts with VP11/12. Associates with the VP16-induced complex; binding to host HCFC1 activates VP16 for association with the octamer motif-binding host protein POU2F1, to form a multiprotein-DNA complex responsible for activating transcription of the viral immediate early genes. Interacts with host P-TEFb; this interaction recruits P-TEFb to the viral alpha-gene promoters and overcomes transcriptional inhibition by ICP22 and promotes transcription of IE genes.

Its subcellular location is the virion tegument. It localises to the host nucleus. Functionally, in the early stage of viral replication, acts as a transcriptional activator of immediate-early (IE) gene products (alpha-genes), which is released by invading virions. Recruits P-TEFb to the viral alpha-gene promoters and overcomes transcriptional inhibition by ICP22 to promote transcription of IE genes. VP16-induced complex represents a regulatory switch: when it is on, it promotes IE-gene expression and thus lytic infection, and when it is off, it limits IE-gene transcription favoring latent infection. Acts as a key activator of lytic infection by initiating the lytic program through the assembly of the transcriptional regulatory VP16-induced complex composed of VP16 and two cellular factors, HCFC1 and POU2F1. This complex recognizes the core motif 'TAATGARAT' in alpha-gene promoters. In the late stage of viral replication, VP16, as a tegument, is involved in viral assembly. In terms of biological role, may play a role in the aggregation of tegument proteins around nucleocapsids during virus morphogenesis. The polypeptide is Tegument protein VP16 (Human herpesvirus 1 (strain 17) (HHV-1)).